The following is a 355-amino-acid chain: dTDP-D-glucose 4,6-dehydratase (355 aa).

A substrate-binding site is contributed by T142. D143 (proton donor) is an active-site residue. Catalysis depends on proton acceptor residues E144 and Y166.

It belongs to the NAD(P)-dependent epimerase/dehydratase family. dTDP-glucose dehydratase subfamily. NAD(+) is required as a cofactor.

It catalyses the reaction dTDP-alpha-D-glucose = dTDP-4-dehydro-6-deoxy-alpha-D-glucose + H2O. In Bos taurus (Bovine), this protein is dTDP-D-glucose 4,6-dehydratase (TGDS).